Reading from the N-terminus, the 498-residue chain is Putative BTB/POZ domain-containing protein L788 (498 aa).

The BTB domain maps to 28-99; the sequence is TDIILVLEDD…FYGQKIKSGN (72 aa).

The protein belongs to the mimivirus BTB/WD family.

This is Putative BTB/POZ domain-containing protein L788 from Acanthamoeba polyphaga (Amoeba).